The following is a 52-amino-acid chain: Alpha-crystallin B chain (52 aa).

It belongs to the small heat shock protein (HSP20) family. As to quaternary structure, homodimer. Aggregates with homologous proteins, including alpha-A-crystallin and the small heat shock protein HSPB1, to form large heteromeric complexes.

May contribute to the transparency and refractive index of the lens. The polypeptide is Alpha-crystallin B chain (CRYAB) (Trachemys scripta elegans (Red-eared slider turtle)).